Here is a 2073-residue protein sequence, read N- to C-terminus: Non-reducing polyketide synthase cla3 (2073 aa).

The tract at residues 9–242 (LLFGDYTEPW…EKLNIHALQH (234 aa)) is N-terminal acylcarrier protein transacylase domain (SAT). The Ketosynthase family 3 (KS3) domain occupies 363–793 (SGRIAIVGMS…GGNGCLLLEE (431 aa)). Catalysis depends on for beta-ketoacyl synthase activity residues cysteine 538, histidine 673, and histidine 712. A malonyl-CoA:ACP transacylase (MAT) domain region spans residues 898 to 1198 (TFTGQGSQYA…KIMSTLDATG (301 aa)). Serine 987 serves as the catalytic For acyl/malonyl transferase activity. The product template (PT) domain stretch occupies residues 1276–1590 (STCAQYVITE…QNVILERLLG (315 aa)). An N-terminal hotdog fold region spans residues 1279–1420 (AQYVITETKT…AGLESQWEKS (142 aa)). Residues 1279-1586 (AQYVITETKT…FHRVQNVILE (308 aa)) enclose the PKS/mFAS DH domain. Histidine 1311 (proton acceptor; for dehydratase activity) is an active-site residue. The segment at 1439 to 1586 (QGHRIQRDIY…FHRVQNVILE (148 aa)) is C-terminal hotdog fold. Catalysis depends on aspartate 1500, which acts as the Proton donor; for dehydratase activity. The tract at residues 1594-1637 (SSSVPAQASDPLRSKRSPQEARSLPGEAKTEKPGSTIATTSPVL) is disordered. Positions 1641–1718 (KSEQGMFQAL…NLRCAFDEDV (78 aa)) constitute a Carrier domain. Position 1678 is an O-(pantetheine 4'-phosphoryl)serine (serine 1678). The span at 1721-1738 (EFTDSEVTSGTPNSSESV) shows a compositional bias: polar residues. The segment at 1721–1786 (EFTDSEVTSG…GVLDDGSPQP (66 aa)) is disordered. Residues 1747-1774 (PEEHAFKEPKDDSPLARRDMDNSNDRSL) are compositionally biased toward basic and acidic residues. Residues 1805-1950 (FLIADGSGSI…MQQHLRAIFK (146 aa)) form a thioesterase (TE) domain region. Histidine 2058 serves as the catalytic For thioesterase activity.

It participates in secondary metabolite biosynthesis. In terms of biological role, highly reducing polyketide synthase; part of the gene cluster that mediates the biosynthesis of cladosporin, a tricyclic octaketide that acts as an antimalarial agent though inhibition of the Plasmodium falciparum lysyl-tRNA synthetase. The highly reducing polyketide synthase cla2 is responsible for biosynthesis up to the pentaketide stage, including of the tetrahydropyran (THP) ring, whereas the three subsequent ketide extensions with no reduction are catalyzed by the non-reducing polyketide synthase cla3. In Cladosporium cladosporioides, this protein is Non-reducing polyketide synthase cla3.